The sequence spans 224 residues: 2-C-methyl-D-erythritol 4-phosphate cytidylyltransferase (224 aa).

It belongs to the IspD/TarI cytidylyltransferase family. IspD subfamily.

It catalyses the reaction 2-C-methyl-D-erythritol 4-phosphate + CTP + H(+) = 4-CDP-2-C-methyl-D-erythritol + diphosphate. It participates in isoprenoid biosynthesis; isopentenyl diphosphate biosynthesis via DXP pathway; isopentenyl diphosphate from 1-deoxy-D-xylulose 5-phosphate: step 2/6. Its function is as follows. Catalyzes the formation of 4-diphosphocytidyl-2-C-methyl-D-erythritol from CTP and 2-C-methyl-D-erythritol 4-phosphate (MEP). This is 2-C-methyl-D-erythritol 4-phosphate cytidylyltransferase from Clostridium botulinum (strain Eklund 17B / Type B).